Reading from the N-terminus, the 885-residue chain is Exosome complex component 10 (885 aa).

Lys-19 is covalently cross-linked (Glycyl lysine isopeptide (Lys-Gly) (interchain with G-Cter in SUMO2)). The 167-residue stretch at 289–455 (HFISSLDELV…YIYDKMRLEM (167 aa)) folds into the 3'-5' exonuclease domain. Mg(2+) contacts are provided by Asp-313, Glu-315, Asp-371, and Asp-440. The 81-residue stretch at 503-583 (NTQQLTAFQL…QQAREMPLLK (81 aa)) folds into the HRDC domain. A Glycyl lysine isopeptide (Lys-Gly) (interchain with G-Cter in SUMO1); alternate cross-link involves residue Lys-583. Residue Lys-583 forms a Glycyl lysine isopeptide (Lys-Gly) (interchain with G-Cter in SUMO2); alternate linkage. A Glycyl lysine isopeptide (Lys-Gly) (interchain with G-Cter in SUMO2) cross-link involves residue Lys-710. Basic and acidic residues-rich tracts occupy residues 776 to 794 (AAKK…EQKQ) and 804 to 816 (KPKD…KEFT). A disordered region spans residues 776 to 885 (AAKKRERATS…RGFRYNWPQR (110 aa)). At Ser-821 the chain carries Phosphoserine. Residues Lys-826, Lys-833, and Lys-859 each participate in a glycyl lysine isopeptide (Lys-Gly) (interchain with G-Cter in SUMO2) cross-link. Residues 831–848 (NSKSKVSSQFDPNKQTPS) show a composition bias toward polar residues. Positions 861 to 871 (SVGNKSMSFPT) are enriched in polar residues. Residue Lys-873 forms a Glycyl lysine isopeptide (Lys-Gly) (interchain with G-Cter in SUMO2) linkage.

The protein belongs to the exosome component 10/RRP6 family. As to quaternary structure, component of the RNA exosome complex. The catalytically inactive RNA exosome core complex (Exo-9) associates with the catalytic subunit EXOSC10/RRP6 (via its N-terminus). Exo-9 may associate with DIS3 to form the nucleolar exosome complex, or DIS3L to form the cytoplasmic exosome complex. The RNA exosome complex interacts with cofactors C1D/RRP47, MPHOSPH6/MPP6 and MTREX/MTR4. Interacts with MTREX; the interaction with MTREX mediates the association of MTREX with nuclear RNA exosomes. Part of the small subunit (SSU) processome, composed of more than 70 proteins and the RNA chaperone small nucleolar RNA (snoRNA) U3. Interacts with ALYREF/THOC4. Interacts with DHX36; this interaction occurs in a RNase-insensitive manner. Interacts with NRDE2. Interacts (via C-terminus) with USP36 (via C-terminus); the interaction is facilitated by the association with RNA and promotes sumoylation of EXOSC10. Mg(2+) serves as cofactor. In terms of processing, sumoylated by USP36; sumoylation does not significantly affect EXOSC10 nucleolar localization and association with core exosome and USP36, but regulates the nucleolar RNA exosome activity in rRNA processing by promoting binding of EXOSC10 to pre-rRNAs. Effects of sumoylation on EXOSC10 levels vary between different studies. Sumoylation of EXOSC10 is required for the modulation of EXOSC10 effects on cellular protein translation and cell proliferation. Sumoylation is promoted by mild hypothermia.

It is found in the cytoplasm. It localises to the nucleus. The protein localises to the nucleolus. Its subcellular location is the nucleoplasm. Arginine-rich dipeptide repeat proteins expressed from C9orf72-derived repeat RNA interact with EXOSC10 and inhibit its ability to promote degradation of this RNA. Its function is as follows. Catalytic component of the RNA exosome complex which has 3'-&gt;5' exoribonuclease activity and participates in a multitude of cellular RNA processing and degradation events. In the nucleus, the RNA exosome complex is involved in proper maturation of stable RNA species such as rRNA, snRNA and snoRNA, in the elimination of RNA processing by-products and non-coding 'pervasive' transcripts, such as antisense RNA species and promoter-upstream transcripts (PROMPTs), and of mRNAs with processing defects, thereby limiting or excluding their export to the cytoplasm. Part of the small subunit (SSU) processome, first precursor of the small eukaryotic ribosomal subunit. During the assembly of the SSU processome in the nucleolus, many ribosome biogenesis factors, an RNA chaperone and ribosomal proteins associate with the nascent pre-rRNA and work in concert to generate RNA folding, modifications, rearrangements and cleavage as well as targeted degradation of pre-ribosomal RNA by the RNA exosome. The RNA exosome may be involved in Ig class switch recombination (CSR) and/or Ig variable region somatic hypermutation (SHM) by targeting AICDA deamination activity to transcribed dsDNA substrates. In the cytoplasm, the RNA exosome complex is involved in general mRNA turnover and specifically degrades inherently unstable mRNAs containing AU-rich elements (AREs) within their 3' untranslated regions, and in RNA surveillance pathways, preventing translation of aberrant mRNAs. It seems to be involved in degradation of histone mRNA. EXOSC10 is required for nucleolar localization of C1D and probably mediates the association of MTREX, C1D and MPHOSPH6 with the RNA exosome involved in the maturation of 5.8S rRNA. Plays a role in the recruitment of replication protein A complex (RPA) and RAD51 to DNA double-strand breaks caused by irradiation, contributing to DNA repair by homologous recombination. Regulates levels of damage-induced RNAs in order to prevent DNA-RNA hybrid formation at DNA double-strand breaks and limit DNA end resection after damage. Plays a role in oocyte development, maturation and survival. Required for normal testis development and mitotic division of spermatogonia. Plays a role in proper embryo development. Required for global protein translation. Required for cell proliferation. Regulates metabolism of C9orf72-derived repeat RNA that can be translated into toxic dipeptide repeat proteins. The protein is Exosome complex component 10 of Homo sapiens (Human).